The chain runs to 134 residues: uncharacterized protein (134 aa).

The protein localises to the mitochondrion. This is an uncharacterized protein from Saccharomyces cerevisiae (strain ATCC 204508 / S288c) (Baker's yeast).